The sequence spans 300 residues: Cation-efflux pump FieF (300 aa).

Transmembrane regions (helical) follow at residues 12-32, 39-59, 82-102, and 114-134; these read AALA…FAWW, ILAA…NLLV, AALA…LTGI, and PLVG…LVTF. Aspartate 45 and aspartate 49 together coordinate Zn(2+). 2 residues coordinate Zn(2+): histidine 153 and aspartate 157. 2 helical membrane-spanning segments follow: residues 156–176 and 182–202; these read SDVM…YGLH and FALG…YEAI.

The protein belongs to the cation diffusion facilitator (CDF) transporter (TC 2.A.4) family. FieF subfamily. As to quaternary structure, homodimer.

It is found in the cell inner membrane. It catalyses the reaction Zn(2+)(in) + H(+)(out) = Zn(2+)(out) + H(+)(in). The catalysed reaction is Cd(2+)(in) + H(+)(out) = Cd(2+)(out) + H(+)(in). The enzyme catalyses Fe(2+)(in) + H(+)(out) = Fe(2+)(out) + H(+)(in). Divalent metal cation transporter which exports Zn(2+), Cd(2+) and possibly Fe(2+). May be involved in zinc and iron detoxification by efflux. This chain is Cation-efflux pump FieF, found in Cronobacter sakazakii (strain ATCC BAA-894) (Enterobacter sakazakii).